The chain runs to 513 residues: Probable DNA ligase (513 aa).

Glutamate 215 lines the ATP pocket. The active-site N6-AMP-lysine intermediate is lysine 217. Residues arginine 222, arginine 237, glutamate 266, phenylalanine 306, arginine 378, and lysine 384 each coordinate ATP.

It belongs to the ATP-dependent DNA ligase family. Mg(2+) serves as cofactor.

The catalysed reaction is ATP + (deoxyribonucleotide)n-3'-hydroxyl + 5'-phospho-(deoxyribonucleotide)m = (deoxyribonucleotide)n+m + AMP + diphosphate.. Its function is as follows. DNA ligase that seals nicks in double-stranded DNA during DNA replication, DNA recombination and DNA repair. The chain is Probable DNA ligase from Mycobacterium marinum (strain ATCC BAA-535 / M).